Reading from the N-terminus, the 185-residue chain is uncharacterized protein (185 aa).

The N-terminal stretch at 1-29 is a signal peptide; sequence MKLFSRTSLVALGTAAAITLSGVTAPAFA. A disordered region spans residues 41–66; sequence KTAEDNTPEAPGASTPLKLEQPGTIT.

In terms of processing, glycosylated; by Pmt.

It is found in the secreted. This is an uncharacterized protein from Corynebacterium glutamicum (strain ATCC 13032 / DSM 20300 / JCM 1318 / BCRC 11384 / CCUG 27702 / LMG 3730 / NBRC 12168 / NCIMB 10025 / NRRL B-2784 / 534).